We begin with the raw amino-acid sequence, 306 residues long: uncharacterized protein (306 aa).

9 helical membrane-spanning segments follow: residues 6-26, 37-57, 67-87, 91-111, 125-145, 148-168, 177-197, 213-233, and 251-271; these read VQIMISHSLMIGLWASAFPGI, HLALFRLLIGSMALLLFAVLT, IPAIFLLGFLGFAFYHILLNI, TVSAGVASLLVTTAPIFSAML, WLGSMISLLGVLLIAFGAGDF, SMSGILVILLAAFSESIYFVF, GFIPFVTFTIWGGTIPMLVFL, LSIVYLGLLPTVIPYFALAYV, and ALALIISWLWIGEIPTLLSLL. EamA domains lie at 17 to 140 and 160 to 285; these read GLWA…LIAF and FSES…FTYL.

It belongs to the EamA transporter family.

The protein localises to the cell membrane. This is an uncharacterized protein from Bacillus subtilis (strain 168).